A 156-amino-acid polypeptide reads, in one-letter code: Small ribosomal subunit protein uS7 (156 aa).

It belongs to the universal ribosomal protein uS7 family. Part of the 30S ribosomal subunit. Contacts proteins S9 and S11.

In terms of biological role, one of the primary rRNA binding proteins, it binds directly to 16S rRNA where it nucleates assembly of the head domain of the 30S subunit. Is located at the subunit interface close to the decoding center, probably blocks exit of the E-site tRNA. This is Small ribosomal subunit protein uS7 from Synechococcus sp. (strain CC9902).